The primary structure comprises 207 residues: Large ribosomal subunit protein uL4 (207 aa).

Residues 45–89 (RQGTHKVKTRSEVRGGGRKPWRQKGTGRARQGSIRSPQWRGGGTV) form a disordered region. The span at 60-71 (GGRKPWRQKGTG) shows a compositional bias: basic residues.

It belongs to the universal ribosomal protein uL4 family. Part of the 50S ribosomal subunit.

Its function is as follows. One of the primary rRNA binding proteins, this protein initially binds near the 5'-end of the 23S rRNA. It is important during the early stages of 50S assembly. It makes multiple contacts with different domains of the 23S rRNA in the assembled 50S subunit and ribosome. In terms of biological role, forms part of the polypeptide exit tunnel. This chain is Large ribosomal subunit protein uL4, found in Bacillus mycoides (strain KBAB4) (Bacillus weihenstephanensis).